Reading from the N-terminus, the 327-residue chain is Probable cytosolic iron-sulfur protein assembly protein CIAO1 homolog (327 aa).

7 WD repeats span residues 3–42, 48–87, 92–131, 137–176, 181–220, 239–278, and 290–327; these read GHED…WICK, GHQR…FECN, GHEN…EYEC, SHTQ…WSCC, GHES…NQEG, YHDR…DRNQ, and AHSM…PAEE.

The protein belongs to the WD repeat CIA1 family.

Its function is as follows. Essential component of the cytosolic iron-sulfur (Fe/S) protein assembly machinery. Required for the maturation of extramitochondrial Fe/S proteins. This is Probable cytosolic iron-sulfur protein assembly protein CIAO1 homolog from Nematostella vectensis (Starlet sea anemone).